The chain runs to 186 residues: Elongation factor P (186 aa).

Belongs to the elongation factor P family.

The protein localises to the cytoplasm. It participates in protein biosynthesis; polypeptide chain elongation. Functionally, involved in peptide bond synthesis. Stimulates efficient translation and peptide-bond synthesis on native or reconstituted 70S ribosomes in vitro. Probably functions indirectly by altering the affinity of the ribosome for aminoacyl-tRNA, thus increasing their reactivity as acceptors for peptidyl transferase. This Prochlorococcus marinus (strain SARG / CCMP1375 / SS120) protein is Elongation factor P.